The chain runs to 319 residues: tRNA U34 carboxymethyltransferase (319 aa).

Residues Lys88, Trp102, Lys107, Gly126, 176 to 177 (LE), Met192, Tyr196, and Arg311 contribute to the carboxy-S-adenosyl-L-methionine site.

Belongs to the class I-like SAM-binding methyltransferase superfamily. CmoB family. In terms of assembly, homotetramer.

The enzyme catalyses carboxy-S-adenosyl-L-methionine + 5-hydroxyuridine(34) in tRNA = 5-carboxymethoxyuridine(34) in tRNA + S-adenosyl-L-homocysteine + H(+). Its function is as follows. Catalyzes carboxymethyl transfer from carboxy-S-adenosyl-L-methionine (Cx-SAM) to 5-hydroxyuridine (ho5U) to form 5-carboxymethoxyuridine (cmo5U) at position 34 in tRNAs. This chain is tRNA U34 carboxymethyltransferase, found in Pseudomonas savastanoi pv. phaseolicola (strain 1448A / Race 6) (Pseudomonas syringae pv. phaseolicola (strain 1448A / Race 6)).